The following is a 102-amino-acid chain: Defensin (102 aa).

The signal sequence occupies residues 1–25; it reads MKCATIVCTIAVVLAATLLNGSVQA. The propeptide occupies 26 to 62; sequence APQEEAALSGGANLNTLLDELPEETHHAALENYRAKR. 3 disulfide bridges follow: C65–C92, C78–C98, and C82–C100.

It belongs to the invertebrate defensin family. Type 1 subfamily.

It is found in the secreted. In terms of biological role, responsible for the anti Gram-positive activity of immune hemolymph. The polypeptide is Defensin (Def1) (Anopheles gambiae (African malaria mosquito)).